The primary structure comprises 229 residues: Small ribosomal subunit protein uS3 (229 aa).

The KH type-2 domain occupies 39-107 (VRQFLIKELK…PAQINISEVR (69 aa)).

Belongs to the universal ribosomal protein uS3 family. In terms of assembly, part of the 30S ribosomal subunit. Forms a tight complex with proteins S10 and S14.

In terms of biological role, binds the lower part of the 30S subunit head. Binds mRNA in the 70S ribosome, positioning it for translation. In Photobacterium profundum (strain SS9), this protein is Small ribosomal subunit protein uS3.